Here is a 320-residue protein sequence, read N- to C-terminus: Cytochrome f (320 aa).

The first 32 residues, 1–32, serve as a signal peptide directing secretion; the sequence is MKTKKSYDKVTRWVTPPILMLIIIHIITGACS. Heme contacts are provided by tyrosine 36, cysteine 56, cysteine 59, and histidine 60. The helical transmembrane segment at 286–306 threads the bilayer; it reads IQGLLGFLASVVLAQIFLVLK.

It belongs to the cytochrome f family. The 4 large subunits of the cytochrome b6-f complex are cytochrome b6, subunit IV (17 kDa polypeptide, petD), cytochrome f and the Rieske protein, while the 4 small subunits are PetG, PetL, PetM and PetN. The complex functions as a dimer. Requires heme as cofactor.

It localises to the plastid. It is found in the chloroplast thylakoid membrane. Its function is as follows. Component of the cytochrome b6-f complex, which mediates electron transfer between photosystem II (PSII) and photosystem I (PSI), cyclic electron flow around PSI, and state transitions. This chain is Cytochrome f, found in Gnetum parvifolium (Small-leaved jointfir).